Consider the following 120-residue polypeptide: UPF0102 protein CbuK_0265 (120 aa).

Belongs to the UPF0102 family.

In Coxiella burnetii (strain CbuK_Q154) (Coxiella burnetii (strain Q154)), this protein is UPF0102 protein CbuK_0265.